The following is a 465-amino-acid chain: Uronate isomerase (465 aa).

This sequence belongs to the metallo-dependent hydrolases superfamily. Uronate isomerase family.

The enzyme catalyses D-glucuronate = D-fructuronate. It carries out the reaction aldehydo-D-galacturonate = keto-D-tagaturonate. The protein operates within carbohydrate metabolism; pentose and glucuronate interconversion. The protein is Uronate isomerase of Bacillus velezensis (strain DSM 23117 / BGSC 10A6 / LMG 26770 / FZB42) (Bacillus amyloliquefaciens subsp. plantarum).